Here is a 132-residue protein sequence, read N- to C-terminus: Small ribosomal subunit protein uS8 (132 aa).

It belongs to the universal ribosomal protein uS8 family. In terms of assembly, part of the 30S ribosomal subunit. Contacts proteins S5 and S12.

Functionally, one of the primary rRNA binding proteins, it binds directly to 16S rRNA central domain where it helps coordinate assembly of the platform of the 30S subunit. The protein is Small ribosomal subunit protein uS8 of Streptococcus uberis (strain ATCC BAA-854 / 0140J).